The following is a 460-amino-acid chain: 3-ketoacyl-CoA synthase 7 (460 aa).

A helical membrane pass occupies residues F21–F41. Residues Y38–W328 form the FAE domain. Active-site residues include C183, H262, H345, H349, and N382.

This sequence belongs to the thiolase-like superfamily. Chalcone/stilbene synthases family. In terms of tissue distribution, expressed in flowers.

The protein localises to the membrane. It carries out the reaction a very-long-chain acyl-CoA + malonyl-CoA + H(+) = a very-long-chain 3-oxoacyl-CoA + CO2 + CoA. It functions in the pathway lipid metabolism; fatty acid biosynthesis. This chain is 3-ketoacyl-CoA synthase 7, found in Arabidopsis thaliana (Mouse-ear cress).